Reading from the N-terminus, the 523-residue chain is FAD:protein FMN transferase (523 aa).

3 helical membrane passes run 88-108, 118-138, and 169-189; these read LLAGAGLAYLLPALAFVVALA, GGAALVGGVVLMFSFLPLVLL, and GLALAAGLVLAGGVRVLTAPA. FAD contacts are provided by residues 277 to 279 and aspartate 336; that span reads LFD. Alanine 339 provides a ligand contact to Mg(2+). FAD contacts are provided by residues lysine 342 and 423 to 425; that span reads HII. 2 residues coordinate Mg(2+): aspartate 450 and threonine 454.

It in the N-terminal section; belongs to the RseC family. In the C-terminal section; belongs to the ApbE family. Mg(2+) is required as a cofactor.

It is found in the cell membrane. It catalyses the reaction L-threonyl-[protein] + FAD = FMN-L-threonyl-[protein] + AMP + H(+). Flavin transferase that catalyzes the transfer of the FMN moiety of FAD and its covalent binding to the hydroxyl group of a threonine residue in a target flavoprotein. Is likely involved in the modification of RnfG and RnfD. Required for nitrogen fixation. This is FAD:protein FMN transferase from Rhodobacter capsulatus (Rhodopseudomonas capsulata).